A 312-amino-acid polypeptide reads, in one-letter code: MPATLHDSTKILSLNTGAQIPQIGLGTWQSKENDAYKAVLTALKDGYRHIDTAAIYRNEDQVGQAIKDSGVPREEIFVTTKLWCTQHHEPEVALDQSLKRLGLDYVDLYLMHWPARLDPAYIKNEDILSVPTKKDGSRAVDITNWNFIKTWELMQELPKTGKTKAVGVSNFSINNLKDLLASQGNKLTPAANQVEIHPLLPQDELINFCKSKGIVVEAYSPLGSTDAPLLKEPVILEIAKKNNVQPGHVVISWHVQRGYVVLPKSVNPDRIKTNRKIFTLSTEDFEAINNISKEKGEKRVVHPNWSPFEVFK.

The Proton donor role is filled by Y56. Residue H112 coordinates substrate. S220–N274 lines the NADP(+) pocket. A Phosphoserine modification is found at S306.

The protein belongs to the aldo/keto reductase family.

It localises to the cytoplasm. It catalyses the reaction glycerol + NADP(+) = dihydroxyacetone + NADPH + H(+). Functionally, glycerol dehydrogenase involved in glycerol catabolism under microaerobic conditions. Has mRNA binding activity. This chain is Glycerol 2-dehydrogenase (NADP(+)) (GCY1), found in Saccharomyces cerevisiae (strain ATCC 204508 / S288c) (Baker's yeast).